An 85-amino-acid polypeptide reads, in one-letter code: Neurotoxin BmKAEP2 (85 aa).

Residues 1–21 (MKLFLLLVISASMLIDGLVNA) form the signal peptide. An LCN-type CS-alpha/beta domain is found at 22–82 (DGYIRGSNGC…TWKSESNTCG (61 aa)). 4 cysteine pairs are disulfide-bonded: C31-C81, C35-C56, C42-C63, and C46-C65.

Belongs to the long (4 C-C) scorpion toxin superfamily. Sodium channel inhibitor family. Beta subfamily. Expressed by the venom gland.

It is found in the secreted. Functionally, depressant insect beta-toxins cause a transient contraction paralysis followed by a slow flaccid paralysis. They bind voltage-independently at site-4 of sodium channels (Nav) and shift the voltage of activation toward more negative potentials thereby affecting sodium channel activation and promoting spontaneous and repetitive firing. This toxin is active only on insects. Has potential anti-epilepsy effect. This is Neurotoxin BmKAEP2 from Olivierus martensii (Manchurian scorpion).